The primary structure comprises 156 residues: Bursicon (156 aa).

A signal peptide spans 1 to 26 (MYALDFLFIAFVYFAACHIQEKPVRA). Disulfide bonds link Cys-37/Cys-86, Cys-51/Cys-100, Cys-61/Cys-121, Cys-65/Cys-123, and Cys-83/Cys-126. One can recognise a CTCK domain in the interval 37–127 (CQMTPVIHIL…PLECMCRPCG (91 aa)).

Heterodimer of burs and pburs.

Its subcellular location is the secreted. Its function is as follows. Final heterodimeric neurohormone released at the end of the molting cycle, involved in the sclerotization (tanning) of the insect cuticle, melanization and wing spreading. This Manduca sexta (Tobacco hawkmoth) protein is Bursicon.